The sequence spans 238 residues: Purine nucleoside phosphorylase DeoD-type (238 aa).

Position 5 (H5) interacts with a purine D-ribonucleoside. Phosphate contacts are provided by residues G21, R25, R44, and 88–91 (RVGS). A purine D-ribonucleoside contacts are provided by residues 180-182 (EME) and 204-205 (SD). The Proton donor role is filled by D205.

It belongs to the PNP/UDP phosphorylase family. Homohexamer; trimer of homodimers.

The enzyme catalyses a purine D-ribonucleoside + phosphate = a purine nucleobase + alpha-D-ribose 1-phosphate. It catalyses the reaction a purine 2'-deoxy-D-ribonucleoside + phosphate = a purine nucleobase + 2-deoxy-alpha-D-ribose 1-phosphate. Catalyzes the reversible phosphorolytic breakdown of the N-glycosidic bond in the beta-(deoxy)ribonucleoside molecules, with the formation of the corresponding free purine bases and pentose-1-phosphate. The chain is Purine nucleoside phosphorylase DeoD-type from Photorhabdus laumondii subsp. laumondii (strain DSM 15139 / CIP 105565 / TT01) (Photorhabdus luminescens subsp. laumondii).